Here is a 263-residue protein sequence, read N- to C-terminus: Hydroxyethylthiazole kinase (263 aa).

Substrate is bound at residue Met39. The ATP site is built by Lys115 and Thr160. Gly187 contributes to the substrate binding site.

It belongs to the Thz kinase family. Mg(2+) is required as a cofactor.

It catalyses the reaction 5-(2-hydroxyethyl)-4-methylthiazole + ATP = 4-methyl-5-(2-phosphooxyethyl)-thiazole + ADP + H(+). It functions in the pathway cofactor biosynthesis; thiamine diphosphate biosynthesis; 4-methyl-5-(2-phosphoethyl)-thiazole from 5-(2-hydroxyethyl)-4-methylthiazole: step 1/1. Catalyzes the phosphorylation of the hydroxyl group of 4-methyl-5-beta-hydroxyethylthiazole (THZ). In Staphylococcus aureus (strain COL), this protein is Hydroxyethylthiazole kinase.